Here is a 280-residue protein sequence, read N- to C-terminus: Probable endonuclease 4 (280 aa).

H68, H108, E143, D177, H180, H214, D227, H229, and E259 together coordinate Zn(2+).

Belongs to the AP endonuclease 2 family. Zn(2+) is required as a cofactor.

The catalysed reaction is Endonucleolytic cleavage to 5'-phosphooligonucleotide end-products.. Endonuclease IV plays a role in DNA repair. It cleaves phosphodiester bonds at apurinic or apyrimidinic (AP) sites, generating a 3'-hydroxyl group and a 5'-terminal sugar phosphate. This Cenarchaeum symbiosum (strain A) protein is Probable endonuclease 4.